Here is a 203-residue protein sequence, read N- to C-terminus: Endo-type membrane-bound lytic murein transglycosylase A (203 aa).

Residues 1 to 15 form the signal peptide; it reads MKLRWFAFLIVLLAG. The N-palmitoyl cysteine moiety is linked to residue Cys16. Cys16 carries S-diacylglycerol cysteine lipidation.

The protein belongs to the transglycosylase Slt family.

The protein resides in the cell outer membrane. The catalysed reaction is Endolytic cleavage of the (1-&gt;4)-beta-glycosidic linkage between N-acetylmuramic acid (MurNAc) and N-acetylglucosamine (GlcNAc) residues in peptidoglycan with concomitant formation of a 1,6-anhydrobond in the MurNAc residue.. Its function is as follows. Murein-degrading enzyme. May play a role in recycling of muropeptides during cell elongation and/or cell division. Preferentially cleaves at a distance of more than two disaccharide units from the ends of the glycan chain. This is Endo-type membrane-bound lytic murein transglycosylase A from Escherichia coli O1:K1 / APEC.